The chain runs to 457 residues: RuvB-like helicase 1 (457 aa).

Residue 73-80 (GGPSTGKT) participates in ATP binding.

The protein belongs to the RuvB family. In terms of assembly, may form heterododecamers with RVB2. Component of the SWR1 chromatin remodeling complex, the INO80 chromatin remodeling complex, and of the R2TP complex.

It is found in the nucleus. It catalyses the reaction ATP + H2O = ADP + phosphate + H(+). In terms of biological role, DNA helicase which participates in several chromatin remodeling complexes, including the SWR1 and the INO80 complexes. The SWR1 complex mediates the ATP-dependent exchange of histone H2A for the H2A variant HZT1 leading to transcriptional regulation of selected genes by chromatin remodeling. The INO80 complex remodels chromatin by shifting nucleosomes and is involved in DNA repair. Also involved in pre-rRNA processing. The chain is RuvB-like helicase 1 (RVB1) from Kluyveromyces lactis (strain ATCC 8585 / CBS 2359 / DSM 70799 / NBRC 1267 / NRRL Y-1140 / WM37) (Yeast).